The sequence spans 240 residues: tRNA pseudouridine synthase A (240 aa).

The active-site Nucleophile is aspartate 50. Tyrosine 109 is a binding site for substrate.

It belongs to the tRNA pseudouridine synthase TruA family. Homodimer.

The catalysed reaction is uridine(38/39/40) in tRNA = pseudouridine(38/39/40) in tRNA. In terms of biological role, formation of pseudouridine at positions 38, 39 and 40 in the anticodon stem and loop of transfer RNAs. This is tRNA pseudouridine synthase A from Campylobacter jejuni (strain RM1221).